Here is a 474-residue protein sequence, read N- to C-terminus: Eukaryotic translation initiation factor 3 subunit L (474 aa).

One can recognise a PCI domain in the interval 255 to 449; that stretch reads DAIRMFSHIL…DLDYALQGDL (195 aa).

Belongs to the eIF-3 subunit L family. As to quaternary structure, component of the eukaryotic translation initiation factor 3 (eIF-3) complex.

It localises to the cytoplasm. In terms of biological role, component of the eukaryotic translation initiation factor 3 (eIF-3) complex, which is involved in protein synthesis of a specialized repertoire of mRNAs and, together with other initiation factors, stimulates binding of mRNA and methionyl-tRNAi to the 40S ribosome. The eIF-3 complex specifically targets and initiates translation of a subset of mRNAs involved in cell proliferation. This Neurospora crassa (strain ATCC 24698 / 74-OR23-1A / CBS 708.71 / DSM 1257 / FGSC 987) protein is Eukaryotic translation initiation factor 3 subunit L.